We begin with the raw amino-acid sequence, 150 residues long: MGNVISKVKSLLGFEDYEEYDEYEEEQYEEQVKDEDEIEPVITNKKNSKVVNIHTSSTTKVTITKPIDYEEATEICEALKNRRIVLVNTTVLELKIAQRLLDFISGSCYALGGELQQIEKGVYILSPSNVEVTNELKNELSSKALFNWSK.

The protein belongs to the SepF family. As to quaternary structure, homodimer. Interacts with FtsZ.

The protein localises to the cytoplasm. Its function is as follows. Cell division protein that is part of the divisome complex and is recruited early to the Z-ring. Probably stimulates Z-ring formation, perhaps through the cross-linking of FtsZ protofilaments. Its function overlaps with FtsA. In Clostridium beijerinckii (strain ATCC 51743 / NCIMB 8052) (Clostridium acetobutylicum), this protein is Cell division protein SepF.